The following is a 716-amino-acid chain: MTDLGLKWSCEYCTYENWPSAIKCTMCRAQRHNAPIITEEPFKSSSSLDPSLCTTQGGSTLLICPDSSARPRVRIADELPETSSKWSCHMCTYLNWPRAIRCTQCLSQRQQGSQQHSPLSPSETPQTSGSRPSPVTSDPCEEYNDRNRLNMHAQRWPCSACTYENWPKSLRCVVCDHPKPSGSPETPQQDSEAESATSPSIVNEQERENVRTAGGGGGGSRGRLRKLSPPMCKGQAEVKIELASGAVGSDNEQEADFKKLKQIRNRMRRSDWLFLNACAGVVEGDLAAVEAYKSSGGDIARQLTADEVRILNRPSAFDAGFTLVHLAIRFQRQDMLAVLLTEVSQQTAKCIPALVCPELTEQIRREVAAALHRRKGEFPCYFFTDLVTFTLPADIEDLPPNVQEKLFDEVLDRDVQKELEEESPIINWSLELGTRLDSRLYALWNRTAGDCLLDSVLQATWGIYDKDSVLRKSLNDSLHDCSHWFYTRWKEWESWYSQSFGLHFSLREEQWQEDWAFILSLASQPGASLEQTHVFVLAHILRRPIIVYGVKYYKSFRGETLGYTRFQGVYLPLLWEQSFCWKSPIALGYTRGHFSALVAMENDGYDNRGAGANLNTDDDVTVTFLPLVDSERKLLHIHFLSAQEMGTEEQQERMLRQWMDCCVTEGGVLVAMQKSSRRRNHPLVTQMVEKWLDGYRQLAACPTLSDGEEEEEDEDE.

2 RanBP2-type zinc fingers span residues 3–33 (DLGL…QRHN) and 82–111 (TSSK…QRQQ). Positions 10, 13, 24, 27, 88, 91, 102, and 105 each coordinate Zn(2+). The tract at residues 113 to 143 (SQQHSPLSPSETPQTSGSRPSPVTSDPCEEY) is disordered. Residues 118–136 (PLSPSETPQTSGSRPSPVT) show a composition bias toward polar residues. Residues 152–181 (HAQRWPCSACTYENWPKSLRCVVCDHPKPS) form a RanBP2-type 3 zinc finger. The Zn(2+) site is built by Cys158, Cys161, Cys172, and Cys175. A disordered region spans residues 178–228 (PKPSGSPETPQQDSEAESATSPSIVNEQERENVRTAGGGGGGSRGRLRKLS). A compositionally biased stretch (polar residues) spans 183 to 203 (SPETPQQDSEAESATSPSIVN). ANK repeat units lie at residues 268-298 (RRSD…SGGD) and 321-348 (FTLV…QQTA). The region spanning 440–600 (LYALWNRTAG…RGHFSALVAM (161 aa)) is the OTU domain. The Nucleophile role is filled by Cys451. Residue His593 is the Proton acceptor of the active site.

The protein belongs to the peptidase C64 family.

The protein resides in the cytoplasm. The protein localises to the nucleus. It catalyses the reaction Thiol-dependent hydrolysis of ester, thioester, amide, peptide and isopeptide bonds formed by the C-terminal Gly of ubiquitin (a 76-residue protein attached to proteins as an intracellular targeting signal).. Functionally, ubiquitin thioesterase, which specifically hydrolyzes 'Lys-29'-linked and 'Lys-33'-linked diubiquitin. Also cleaves 'Lys-63'-linked chains, but with 40-fold less efficiency compared to 'Lys-29'-linked ones. Positive regulator of the Wnt signaling pathway that deubiquitinates apc protein, a negative regulator of Wnt-mediated transcription. Acts as a regulator of autophagy by mediating deubiquitination of pik3c3/vps34, thereby promoting autophagosome maturation. Plays a role in the regulation of cell morphology and cytoskeletal organization. Required in the stress fiber dynamics and cell migration. The chain is Ubiquitin thioesterase zranb1-B (zranb1b) from Danio rerio (Zebrafish).